We begin with the raw amino-acid sequence, 324 residues long: Zinc metalloproteinase leucurolysin-B (324 aa).

Positions 1–119 (DTVLLNRISH…LNPQCILNEP (119 aa)) constitute a Peptidase M12B domain. Residue Asp-11 coordinates Ca(2+). Cystine bridges form between Cys-34/Cys-114, Cys-74/Cys-98, and Cys-76/Cys-81. Zn(2+) is bound at residue His-59. Residue Glu-60 is part of the active site. Zn(2+) contacts are provided by His-63 and His-69. Asn-97 is a glycosylation site (N-linked (GlcNAc...) asparagine). Residues Cys-114, Asn-117, Val-129, Asn-132, Leu-134, Glu-136, Glu-139, and Asp-142 each coordinate Ca(2+). A Disintegrin domain is found at 127-213 (PPVCGNELLE…QCPTDDFKRN (87 aa)). Disulfide bonds link Cys-130-Cys-159, Cys-141-Cys-154, Cys-143-Cys-149, Cys-153-Cys-176, Cys-167-Cys-173, Cys-172-Cys-198, Cys-185-Cys-205, Cys-192-Cys-224, Cys-217-Cys-229, Cys-236-Cys-286, Cys-251-Cys-295, Cys-264-Cys-274, and Cys-281-Cys-315. The short motif at 191–193 (ECD) is the D/ECD-tripeptide element. Asn-296 and Asn-305 each carry an N-linked (GlcNAc...) asparagine glycan.

It belongs to the venom metalloproteinase (M12B) family. P-III subfamily. P-IIIa sub-subfamily. Monomer. Requires Zn(2+) as cofactor. In terms of processing, N-glycosylated. Post-translationally, the N-terminus is blocked. Expressed by the venom gland.

It is found in the secreted. Its activity is regulated as follows. Inhibited by EDTA, but not by PMSF. Pre-incubation with 2 mM DTT completely abolishes activity. Snake venom zinc metalloproteinase that acts as a potent hemorrhagic toxin. Hydrolyzes the insulin B chain at the 14-Ala-|-Leu-15 bond but not the 16-Tyr-|-Leu-17 bond. Degrades the alpha-chain of fibrin and hydrolyzes the Aalpha-chain of fibrinogen (FGA) while leaving the beta and gamma chains unaffected. Degrades type-I collagen and its gelatin. Degrades the alpha-1 chain of type-IV collagen and its gelatin but not the alpha-2 chain. Degrades plasma fibronectin, plasma vitronectin and basement membrane enactin. It inhibits collagen-induced platelet aggregation. The chain is Zinc metalloproteinase leucurolysin-B from Bothrops leucurus (Whitetail lancehead).